The following is a 491-amino-acid chain: Probable cobyric acid synthase (491 aa).

A GATase cobBQ-type domain is found at 252-444 (PVEVNIVKFS…LHGILENFEF (193 aa)). Cys-330 acts as the Nucleophile in catalysis. The active site involves His-436.

It belongs to the CobB/CobQ family. CobQ subfamily.

Its pathway is cofactor biosynthesis; adenosylcobalamin biosynthesis. Catalyzes amidations at positions B, D, E, and G on adenosylcobyrinic A,C-diamide. NH(2) groups are provided by glutamine, and one molecule of ATP is hydrogenolyzed for each amidation. In Methanococcus vannielii (strain ATCC 35089 / DSM 1224 / JCM 13029 / OCM 148 / SB), this protein is Probable cobyric acid synthase.